The chain runs to 90 residues: Small ribosomal subunit protein bS20 (90 aa).

It belongs to the bacterial ribosomal protein bS20 family.

Binds directly to 16S ribosomal RNA. This chain is Small ribosomal subunit protein bS20, found in Nautilia profundicola (strain ATCC BAA-1463 / DSM 18972 / AmH).